The primary structure comprises 814 residues: Rho GTPase-activating protein 26 (814 aa).

The region spanning 7–262 (EFSDCCLDSP…MKENPLEHKT (256 aa)) is the BAR domain. The PH domain maps to 265–369 (PYTMEGYLYV…WMEAMDGREP (105 aa)). One can recognise a Rho-GAP domain in the interval 383-568 (AQLDSIGFSI…ILIENHEKIF (186 aa)). Positions 624–648 (LESVSSNPNSILNSSSSLQPNMNSS) are enriched in low complexity. Positions 624-696 (LESVSSNPNS…MPTSSTSSDS (73 aa)) are disordered. Residues 662–672 (SLPPNPSPTSP) are compositionally biased toward pro residues. S668 is modified (phosphoserine). At T670 the chain carries Phosphothreonine. S671 carries the post-translational modification Phosphoserine. Positions 673-696 (LSPSWPMFSAPSSPMPTSSTSSDS) are enriched in low complexity. The SH3 domain maps to 756-814 (TPFRKAKALYACKAEHDSELSFTAGTVFDNVHPSQEPGWLEGTLNGKTGLIPENYVEFL).

Interacts with NYAP1, NYAP2 and MYO16. Interacts with MICAL1 and WDR44. Binds to the C-terminus of PTK2/FAK1. As to quaternary structure, (Microbial infection) Interacts with human parainfluenza virus type 2 proteins P and V. In terms of processing, phosphorylated in a PINK1-dependent fashion promoting retrograde mitochondrial trafficking and clustering.

It is found in the endosome membrane. Its subcellular location is the cytoplasm. The protein localises to the cell junction. The protein resides in the focal adhesion. It localises to the cytoskeleton. Its function is as follows. GTPase-activating protein for RHOA and CDC42. Facilitates mitochondrial quality control by promoting Parkin-mediated recruitment of autophagosomes to damaged mitochondria. Negatively regulates the growth of human parainfluenza virus type 2 by inhibiting hPIV-2-mediated RHOA activation via interaction with two of its viral proteins P and V. Functionally, associates with MICAL1 on the endosomal membrane to promote Rab8-Rab10-dependent tubule extension. After dissociation of MICAL1, recruits WDR44 which connects the endoplasmic reticulum (ER) with the endosomal tubule, thereby participating in the export of a subset of neosynthesized proteins. This chain is Rho GTPase-activating protein 26 (ARHGAP26), found in Homo sapiens (Human).